A 1845-amino-acid chain; its full sequence is Collagen alpha-1(XXVII) chain (1845 aa).

The first 39 residues, 1-39 (MGTGFARGARGTAASGPGGGFLFAWILVSFTCHLASTQG), serve as a signal peptide directing secretion. A propeptide spans 40–609 (APEDVDVLQR…LGPTPFPMLM (570 aa)) (N-terminal propeptide). The region spanning 72-237 (PSGFIFTQRA…NYCAHLRERC (166 aa)) is the Laminin G-like domain. Residue Asn-272 is glycosylated (N-linked (GlcNAc...) asparagine). 4 disordered regions span residues 299–478 (TKPL…VPKT), 502–572 (PPLG…RPST), 608–774 (LMGP…MGRP), and 827–1608 (LMGG…HPIQ). Polar residues predominate over residues 312–323 (HSSSQTPLSPAK). 2 stretches are compositionally biased toward low complexity: residues 327 to 343 (RKTP…NSTR) and 356 to 372 (TTTS…SVSP). Asn-340 is a glycosylation site (N-linked (GlcNAc...) asparagine). Positions 429 to 439 (PRPPVPSPQPL) are enriched in pro residues. Over residues 444–454 (GLSKKFTNPTV) the composition is skewed to polar residues. The span at 554–564 (SARDASPRDLT) shows a compositional bias: basic and acidic residues. 11 consecutive Collagen-like domains span residues 610-664 (GPPG…GDPG), 673-732 (GAKG…PGPV), 742-801 (GYIG…PGPP), 817-876 (GYPG…PGPL), 877-936 (GKAG…EGPM), 937-996 (GPPG…VGEK), 997-1038 (GDRG…PGSR), 1039-1096 (GLPG…GAKG), 1117-1176 (GSQG…PGLE), 1177-1236 (GDHG…QGEK), and 1240-1299 (GAKG…NGHK). Residues 610 to 1603 (GPPGSKGDCG…RGRPGPPGPP (994 aa)) form a triple-helical region. Residues 639–654 (RGPPGPYGNPGPPGPP) show a composition bias toward pro residues. Low complexity-rich tracts occupy residues 677-690 (NMGL…PGPL) and 699-719 (PGAA…SPGA). The span at 865 to 874 (GLPGGRGKPG) shows a compositional bias: gly residues. Residues 896-909 (FPGDIGPPGDNGPE) show a composition bias toward low complexity. Residues 1018 to 1027 (GTPGGIGNPG) are compositionally biased toward gly residues. Composition is skewed to low complexity over residues 1074–1086 (RGRP…QGAA), 1112–1122 (LPGEPGSQGPQ), and 1152–1167 (KGDL…QGLI). Composition is skewed to basic and acidic residues over residues 1187-1212 (LKGD…KGED) and 1226-1238 (REGK…EKGQ). Basic and acidic residues-rich tracts occupy residues 1311 to 1323 (KGEK…DGKT) and 1335 to 1345 (PVGDRGDRGEP). The region spanning 1325–1384 (GPPGPPGDRGPVGDRGDRGEPGDPGYPGQEGVQGLRGEPGQQGQPGHPGPRGRPGPKGSK) is the Collagen-like 12 domain. Low complexity-rich tracts occupy residues 1360-1369 (RGEPGQQGQP), 1395-1422 (KAGP…RQGP), and 1438-1465 (PGYQ…PGVA). 3 Collagen-like domains span residues 1424 to 1483 (GTAG…SGLP), 1484 to 1543 (GQLG…KGIQ), and 1544 to 1603 (GPRG…PGPP). The span at 1557-1572 (IIGPPGMLGPSGLPGP) shows a compositional bias: low complexity. Positions 1588 to 1605 (RGPPGPRGRPGPPGPPWH) are enriched in pro residues. Residues 1607 to 1845 (IQFQQDDLGA…RLEVGPACFL (239 aa)) constitute a propeptide, C-terminal propeptide. One can recognise a Fibrillar collagen NC1 domain in the interval 1645-1845 (GEIFKTLHYL…RLEVGPACFL (201 aa)). 3 cysteine pairs are disulfide-bonded: Cys-1675/Cys-1707, Cys-1716/Cys-1843, and Cys-1752/Cys-1796. 4 residues coordinate Ca(2+): Asp-1693, Asn-1695, Cys-1698, and Asp-1701. Asn-1754 carries an N-linked (GlcNAc...) asparagine glycan.

Belongs to the fibrillar collagen family. As to expression, highly expressed in cartilage, eye and ear.

The protein resides in the secreted. It localises to the extracellular space. The protein localises to the extracellular matrix. In terms of biological role, plays a role during the calcification of cartilage and the transition of cartilage to bone. The chain is Collagen alpha-1(XXVII) chain (Col27a1) from Mus musculus (Mouse).